The following is a 223-amino-acid chain: Sugar fermentation stimulation protein homolog (223 aa).

The protein belongs to the SfsA family.

The sequence is that of Sugar fermentation stimulation protein homolog from Thermosipho melanesiensis (strain DSM 12029 / CIP 104789 / BI429).